The chain runs to 116 residues: MKRVYSIKSKNELDLVFKEKKSVGNGYFVIYFIPHETPHFKYAISIGKKFGNAVERNQAKRRLRYIVSNYSNYINPKYRFVIVVRPQSNLLPYDLIKENITKLLIKAKLIEKEAQN.

The protein belongs to the RnpA family. Consists of a catalytic RNA component (M1 or rnpB) and a protein subunit.

The enzyme catalyses Endonucleolytic cleavage of RNA, removing 5'-extranucleotides from tRNA precursor.. RNaseP catalyzes the removal of the 5'-leader sequence from pre-tRNA to produce the mature 5'-terminus. It can also cleave other RNA substrates such as 4.5S RNA. The protein component plays an auxiliary but essential role in vivo by binding to the 5'-leader sequence and broadening the substrate specificity of the ribozyme. This chain is Ribonuclease P protein component, found in Acholeplasma laidlawii (strain PG-8A).